The chain runs to 396 residues: MSKSKFERKKPHVNVGTIGHVDHGKTTLTAAMTVVLAEAFGGDARAFDQIDNAPEEKARGITIATAHVEYETSERHYAHVDCPGHADYVKNMITGAAQMDGAILVVSAADGPMPQTREHILLARQVGVPYIVVYLNKADMVDDEELLELVEMEVRELLSDYDFPGDDTPVITGSALKALEGDDSEIGKPSIIKLAEAMDEYIPTPERPVDQPFLMPIEDVFSISGRGTVVTGRVERGVIKTGEEVEIVGLKETQKTTCTGVEMFRKMLDQGEAGDNIGALLRGTKRDEVERGQVLCKPGSITPHTKFECEVYVLSKDEGGRHTPFFNGYRPQFYFRTTDVTGSCELPEGVEMVMPGDNVKMTVSLIAPIAMEDGLRFAVREGGRTVGAGVVSKIIE.

Residues 10–206 (KPHVNVGTIG…AMDEYIPTPE (197 aa)) form the tr-type G domain. The interval 19 to 26 (GHVDHGKT) is G1. Residue 19-26 (GHVDHGKT) participates in GTP binding. Thr-26 contributes to the Mg(2+) binding site. The segment at 60-64 (GITIA) is G2. The G3 stretch occupies residues 81 to 84 (DCPG). GTP is bound by residues 81-85 (DCPGH) and 136-139 (NKAD). The tract at residues 136–139 (NKAD) is G4. The interval 174–176 (SAL) is G5.

Belongs to the TRAFAC class translation factor GTPase superfamily. Classic translation factor GTPase family. EF-Tu/EF-1A subfamily. In terms of assembly, monomer.

It is found in the cytoplasm. It carries out the reaction GTP + H2O = GDP + phosphate + H(+). Its function is as follows. GTP hydrolase that promotes the GTP-dependent binding of aminoacyl-tRNA to the A-site of ribosomes during protein biosynthesis. The chain is Elongation factor Tu from Alkalilimnicola ehrlichii (strain ATCC BAA-1101 / DSM 17681 / MLHE-1).